Here is a 376-residue protein sequence, read N- to C-terminus: Thymidine kinase (376 aa).

Positions 1–44 (MASYPGHQHASAFDQAARSRGHSNRRTALRPRRQQEATEVRPEQ) are disordered. A compositionally biased stretch (basic residues) spans 19 to 32 (SRGHSNRRTALRPR). Over residues 33 to 44 (RQQEATEVRPEQ) the composition is skewed to basic and acidic residues. Position 56–63 (56–63 (GPHGMGKT)) interacts with ATP. Residue glutamate 83 is the Proton acceptor of the active site. Residues tyrosine 101 and glutamine 125 each coordinate substrate. Arginine 216 contributes to the ATP binding site. Arginine 222 contributes to the substrate binding site. A disordered region spans residues 260 to 280 (GQLSGTAVPPQGAEPQSNAGP).

This sequence belongs to the herpesviridae thymidine kinase family. In terms of assembly, homodimer.

It carries out the reaction thymidine + ATP = dTMP + ADP + H(+). Its function is as follows. Catalyzes the transfer of the gamma-phospho group of ATP to thymidine to generate dTMP in the salvage pathway of pyrimidine synthesis. The dTMP serves as a substrate for DNA polymerase during viral DNA replication. Allows the virus to be reactivated and to grow in non-proliferative cells lacking a high concentration of phosphorylated nucleic acid precursors. The protein is Thymidine kinase of Human herpesvirus 1 (strain HFEM) (HHV-1).